The chain runs to 149 residues: Calmodulin (149 aa).

A2 carries the post-translational modification N-acetylalanine. 4 consecutive EF-hand domains span residues 8-43 (EQIA…LGQN), 44-79 (PTEA…KMKD), 81-116 (DTEE…LGEK), and 117-149 (LTDE…MMAK). Ca(2+)-binding residues include D21, D23, D25, T27, E32, D57, D59, N61, T63, E68, D94, D96, N98, and E105. K116 carries the N6,N6,N6-trimethyllysine modification. Residues D130, D132, D134, H136, and E141 each contribute to the Ca(2+) site.

This sequence belongs to the calmodulin family.

In terms of biological role, calmodulin mediates the control of a large number of enzymes, ion channels and other proteins by Ca(2+). Among the enzymes to be stimulated by the calmodulin-Ca(2+) complex are a number of protein kinases and phosphatases. The polypeptide is Calmodulin (Tetrahymena pyriformis).